We begin with the raw amino-acid sequence, 258 residues long: GTP cyclohydrolase FolE2 (258 aa).

The protein belongs to the GTP cyclohydrolase IV family.

The catalysed reaction is GTP + H2O = 7,8-dihydroneopterin 3'-triphosphate + formate + H(+). It participates in cofactor biosynthesis; 7,8-dihydroneopterin triphosphate biosynthesis; 7,8-dihydroneopterin triphosphate from GTP: step 1/1. In terms of biological role, converts GTP to 7,8-dihydroneopterin triphosphate. The sequence is that of GTP cyclohydrolase FolE2 from Geobacter sulfurreducens (strain ATCC 51573 / DSM 12127 / PCA).